Consider the following 533-residue polypeptide: Probable ADP-ribosylation factor-binding protein C25H2.16c (533 aa).

Positions 15 to 151 (ATEPYAFEPD…LLSYKGYTFP (137 aa)) constitute a VHS domain. A GAT domain is found at 178–305 (REAMSAKLQE…LLTQYDHLLE (128 aa)). Serine 320 is modified (phosphoserine). Positions 417–532 (NNFTSTCAFE…EYTGQSSIRL (116 aa)) constitute a GAE domain.

Belongs to the GGA protein family.

It is found in the golgi apparatus. The protein resides in the trans-Golgi network. Its function is as follows. May play a role in the regulation of membrane traffic through the trans-Golgi network. The chain is Probable ADP-ribosylation factor-binding protein C25H2.16c from Schizosaccharomyces pombe (strain 972 / ATCC 24843) (Fission yeast).